Reading from the N-terminus, the 303-residue chain is Probable acetylxylan esterase A (303 aa).

An N-terminal signal peptide occupies residues 1 to 23; sequence MLSTHLLFLATTLLTSLFHPIAA. S147 functions as the Charge relay system in the catalytic mechanism. N189 carries an N-linked (GlcNAc...) asparagine glycan.

This sequence belongs to the carbohydrate esterase 1 (CE1) family. AxeA subfamily. As to quaternary structure, monomer.

It localises to the secreted. The enzyme catalyses Deacetylation of xylans and xylo-oligosaccharides.. It functions in the pathway glycan degradation; xylan degradation. Functionally, acetylxylan esterase involved in the hydrolysis of xylan, a major structural heterogeneous polysaccharide found in plant biomass representing the second most abundant polysaccharide in the biosphere, after cellulose. Degrades acetylated xylans by cleaving acetyl side groups from the hetero-xylan backbone. This chain is Probable acetylxylan esterase A (axeA), found in Aspergillus niger (strain ATCC MYA-4892 / CBS 513.88 / FGSC A1513).